The primary structure comprises 120 residues: Large ribosomal subunit protein uL18 (120 aa).

Belongs to the universal ribosomal protein uL18 family. In terms of assembly, part of the 50S ribosomal subunit; part of the 5S rRNA/L5/L18/L25 subcomplex. Contacts the 5S and 23S rRNAs.

In terms of biological role, this is one of the proteins that bind and probably mediate the attachment of the 5S RNA into the large ribosomal subunit, where it forms part of the central protuberance. This is Large ribosomal subunit protein uL18 from Bradyrhizobium sp. (strain ORS 278).